Consider the following 499-residue polypeptide: Bifunctional purine biosynthesis protein PurH (499 aa).

The MGS-like domain occupies 1–144; it reads MIKRALISVF…KNFKDVVVLT (144 aa).

It belongs to the PurH family.

The catalysed reaction is (6R)-10-formyltetrahydrofolate + 5-amino-1-(5-phospho-beta-D-ribosyl)imidazole-4-carboxamide = 5-formamido-1-(5-phospho-D-ribosyl)imidazole-4-carboxamide + (6S)-5,6,7,8-tetrahydrofolate. The enzyme catalyses IMP + H2O = 5-formamido-1-(5-phospho-D-ribosyl)imidazole-4-carboxamide. Its pathway is purine metabolism; IMP biosynthesis via de novo pathway; 5-formamido-1-(5-phospho-D-ribosyl)imidazole-4-carboxamide from 5-amino-1-(5-phospho-D-ribosyl)imidazole-4-carboxamide (10-formyl THF route): step 1/1. The protein operates within purine metabolism; IMP biosynthesis via de novo pathway; IMP from 5-formamido-1-(5-phospho-D-ribosyl)imidazole-4-carboxamide: step 1/1. The polypeptide is Bifunctional purine biosynthesis protein PurH (Clostridium botulinum (strain 657 / Type Ba4)).